We begin with the raw amino-acid sequence, 304 residues long: Cell surface-binding protein OPG105 (304 aa).

The protein belongs to the alpha-carbonic anhydrase family. Homodimer; disulfide-linked. Apparently non-glycosylated.

The protein localises to the virion membrane. Functionally, binds to chondroitin sulfate on the cell surface to provide virion attachment to target cell. This Monkeypox virus protein is Cell surface-binding protein OPG105 (OPG105).